We begin with the raw amino-acid sequence, 246 residues long: Probable transcriptional regulatory protein CLL_A1008 (246 aa).

The protein belongs to the TACO1 family.

Its subcellular location is the cytoplasm. The sequence is that of Probable transcriptional regulatory protein CLL_A1008 from Clostridium botulinum (strain Eklund 17B / Type B).